A 396-amino-acid chain; its full sequence is Elongation factor Tu (396 aa).

Residues 10–205 form the tr-type G domain; sequence KPHVNIGTIG…ACDESIPDPV (196 aa). The G1 stretch occupies residues 19-26; sequence GHVDHGKT. Residue 19-26 participates in GTP binding; that stretch reads GHVDHGKT. A Mg(2+)-binding site is contributed by threonine 26. The tract at residues 62 to 66 is G2; it reads GITIN. The G3 stretch occupies residues 83–86; sequence DAPG. Residues 83 to 87 and 138 to 141 each bind GTP; these read DAPGH and NKCD. The segment at 138–141 is G4; the sequence is NKCD. Residues 175–177 form a G5 region; it reads SAL.

It belongs to the TRAFAC class translation factor GTPase superfamily. Classic translation factor GTPase family. EF-Tu/EF-1A subfamily. Monomer.

It is found in the cytoplasm. The enzyme catalyses GTP + H2O = GDP + phosphate + H(+). Its function is as follows. GTP hydrolase that promotes the GTP-dependent binding of aminoacyl-tRNA to the A-site of ribosomes during protein biosynthesis. The protein is Elongation factor Tu of Corynebacterium kroppenstedtii (strain DSM 44385 / JCM 11950 / CIP 105744 / CCUG 35717).